Here is a 472-residue protein sequence, read N- to C-terminus: Methanethiol oxidase (472 aa).

Belongs to the selenium-binding protein family.

The protein localises to the nucleus. The protein resides in the cytoplasm. Its subcellular location is the cytosol. It is found in the membrane. It catalyses the reaction methanethiol + O2 + H2O = hydrogen sulfide + formaldehyde + H2O2 + H(+). Its pathway is organosulfur degradation. Functionally, catalyzes the oxidation of methanethiol, an organosulfur compound known to be produced in substantial amounts by gut bacteria. Selenium-binding protein which may be involved in the sensing of reactive xenobiotics in the cytoplasm. May be involved in intra-Golgi protein transport. The protein is Methanethiol oxidase (selenbp1-a) of Xenopus laevis (African clawed frog).